The following is a 50-amino-acid chain: uncharacterized protein (50 aa).

This is an uncharacterized protein from Haemophilus influenzae (strain ATCC 51907 / DSM 11121 / KW20 / Rd).